A 275-amino-acid chain; its full sequence is MSQQLQQIIDTAWENRAELSPKAAPADVREAVAHAIEQLDKGLLRVAEKKDGDWVVNQWLKKAVLLSFRLEDNAPMPAGGYSQFYDKVPSKFASYTAEDFAAGGFRVVPPAIARRGSFIAKNVVLMPSYTNIGAYVDEGTMVDTWATVGSCAQIGKNVHLSGGVGIGGVLEPLQANPVIIEDNCFIGARSEVVEGVIVEENSVISMGVYLGQSTKIYDRETGEVTYGRIPAGSVVVAGNLPSKDGTHSLYCAVIVKKVDARTRAKVGLNELLRGD.

Substrate-binding residues include R106 and D143.

It belongs to the transferase hexapeptide repeat family. Homotrimer.

Its subcellular location is the cytoplasm. The catalysed reaction is (S)-2,3,4,5-tetrahydrodipicolinate + succinyl-CoA + H2O = (S)-2-succinylamino-6-oxoheptanedioate + CoA. It functions in the pathway amino-acid biosynthesis; L-lysine biosynthesis via DAP pathway; LL-2,6-diaminopimelate from (S)-tetrahydrodipicolinate (succinylase route): step 1/3. This is 2,3,4,5-tetrahydropyridine-2,6-dicarboxylate N-succinyltransferase from Paraburkholderia xenovorans (strain LB400).